Here is a 229-residue protein sequence, read N- to C-terminus: UPF0173 metal-dependent hydrolase SAB1566c (229 aa).

Belongs to the UPF0173 family.

The chain is UPF0173 metal-dependent hydrolase SAB1566c from Staphylococcus aureus (strain bovine RF122 / ET3-1).